A 356-amino-acid chain; its full sequence is Heat-inducible transcription repressor HrcA (356 aa).

It belongs to the HrcA family.

Functionally, negative regulator of class I heat shock genes (grpE-dnaK-dnaJ and groELS operons). Prevents heat-shock induction of these operons. This is Heat-inducible transcription repressor HrcA from Bartonella tribocorum (strain CIP 105476 / IBS 506).